Reading from the N-terminus, the 252-residue chain is Thiamine thiazole synthase (252 aa).

NAD(+)-binding positions include Ser35, Glu54 to Lys55, Gly62, Val126, and His152 to Asp154. Residues Asp154 and His169 each coordinate Fe cation. NAD(+) is bound at residue Met217. A glycine-binding site is contributed by Arg227.

The protein belongs to the THI4 family. In terms of assembly, homooctamer; tetramer of dimers. Requires Fe(2+) as cofactor.

It catalyses the reaction hydrogen sulfide + glycine + NAD(+) = ADP-5-ethyl-4-methylthiazole-2-carboxylate + nicotinamide + 3 H2O + H(+). Its pathway is cofactor biosynthesis; thiamine diphosphate biosynthesis. In terms of biological role, involved in the biosynthesis of the thiazole moiety of thiamine. Catalyzes the conversion of NAD and glycine to adenosine diphosphate 5-(2-hydroxyethyl)-4-methylthiazole-2-carboxylate (ADT), an adenylated thiazole intermediate, using free sulfide as a source of sulfur. The polypeptide is Thiamine thiazole synthase (Pyrococcus abyssi (strain GE5 / Orsay)).